Consider the following 124-residue polypeptide: Large ribosomal subunit protein bL12 (124 aa).

This sequence belongs to the bacterial ribosomal protein bL12 family. Homodimer. Part of the ribosomal stalk of the 50S ribosomal subunit. Forms a multimeric L10(L12)X complex, where L10 forms an elongated spine to which 2 to 4 L12 dimers bind in a sequential fashion. Binds GTP-bound translation factors.

Forms part of the ribosomal stalk which helps the ribosome interact with GTP-bound translation factors. Is thus essential for accurate translation. The sequence is that of Large ribosomal subunit protein bL12 from Hamiltonella defensa subsp. Acyrthosiphon pisum (strain 5AT).